A 100-amino-acid chain; its full sequence is Urease subunit gamma (100 aa).

It belongs to the urease gamma subunit family. In terms of assembly, heterotrimer of UreA (gamma), UreB (beta) and UreC (alpha) subunits. Three heterotrimers associate to form the active enzyme.

It localises to the cytoplasm. The enzyme catalyses urea + 2 H2O + H(+) = hydrogencarbonate + 2 NH4(+). The protein operates within nitrogen metabolism; urea degradation; CO(2) and NH(3) from urea (urease route): step 1/1. The polypeptide is Urease subunit gamma (Nostoc sp. (strain PCC 7120 / SAG 25.82 / UTEX 2576)).